The chain runs to 276 residues: 3-keto-5-aminohexanoate cleavage enzyme (276 aa).

A (5S)-5-amino-3-oxohexanoate-binding site is contributed by Glu-14. His-46 and His-48 together coordinate Zn(2+). (5S)-5-amino-3-oxohexanoate contacts are provided by Ser-82, Gly-85, Thr-106, and Asn-108. Glu-230 contributes to the Zn(2+) binding site.

This sequence belongs to the BKACE family. Kce subfamily. As to quaternary structure, homotetramer. Requires Zn(2+) as cofactor.

It catalyses the reaction (5S)-5-amino-3-oxohexanoate + acetyl-CoA = (3S)-3-aminobutanoyl-CoA + acetoacetate. It functions in the pathway amino-acid degradation; L-lysine degradation via acetate pathway. In terms of biological role, involved in the anaerobic fermentation of lysine. Catalyzes the reversible reaction between 3-keto-5-aminohexanoate (KAH) and acetyl-CoA to form 3-aminobutyryl-CoA and acetoacetate. The reaction involves the deprotonation of KAH, the nucleophilic addition onto acetyl-CoA and the intramolecular transfer of the CoA moiety. The polypeptide is 3-keto-5-aminohexanoate cleavage enzyme (Cloacimonas acidaminovorans (strain Evry)).